The chain runs to 535 residues: Glutamate--cysteine ligase (535 aa).

This sequence belongs to the glutamate--cysteine ligase type 1 family. Type 1 subfamily.

The enzyme catalyses L-cysteine + L-glutamate + ATP = gamma-L-glutamyl-L-cysteine + ADP + phosphate + H(+). Its pathway is sulfur metabolism; glutathione biosynthesis; glutathione from L-cysteine and L-glutamate: step 1/2. This chain is Glutamate--cysteine ligase, found in Pseudomonas syringae pv. syringae.